The chain runs to 209 residues: Kynurenine formamidase (209 aa).

W20 provides a ligand contact to substrate. Positions 50, 54, and 56 each coordinate Zn(2+). The active-site Proton donor/acceptor is H60. Zn(2+) contacts are provided by H161 and E173.

Belongs to the Cyclase 1 superfamily. KynB family. As to quaternary structure, homodimer. Zn(2+) is required as a cofactor.

It carries out the reaction N-formyl-L-kynurenine + H2O = L-kynurenine + formate + H(+). It participates in amino-acid degradation; L-tryptophan degradation via kynurenine pathway; L-kynurenine from L-tryptophan: step 2/2. Functionally, catalyzes the hydrolysis of N-formyl-L-kynurenine to L-kynurenine, the second step in the kynurenine pathway of tryptophan degradation. This chain is Kynurenine formamidase, found in Bacillus mycoides (strain KBAB4) (Bacillus weihenstephanensis).